A 246-amino-acid chain; its full sequence is Probable phosphatase ASA_1316 (246 aa).

Zn(2+) contacts are provided by histidine 8, histidine 10, histidine 16, histidine 41, glutamate 74, histidine 102, histidine 132, aspartate 193, and histidine 195.

This sequence belongs to the PHP family. It depends on Zn(2+) as a cofactor.

The chain is Probable phosphatase ASA_1316 from Aeromonas salmonicida (strain A449).